We begin with the raw amino-acid sequence, 264 residues long: Thymidylate synthase (264 aa).

Arginine 21 is a binding site for dUMP. Histidine 51 serves as a coordination point for (6R)-5,10-methylene-5,6,7,8-tetrahydrofolate. Position 126–127 (arginine 126–arginine 127) interacts with dUMP. The Nucleophile role is filled by cysteine 146. DUMP contacts are provided by residues arginine 166–aspartate 169, asparagine 177, and histidine 207–tyrosine 209. A (6R)-5,10-methylene-5,6,7,8-tetrahydrofolate-binding site is contributed by aspartate 169. Alanine 263 contributes to the (6R)-5,10-methylene-5,6,7,8-tetrahydrofolate binding site.

This sequence belongs to the thymidylate synthase family. Bacterial-type ThyA subfamily. In terms of assembly, homodimer.

The protein resides in the cytoplasm. The catalysed reaction is dUMP + (6R)-5,10-methylene-5,6,7,8-tetrahydrofolate = 7,8-dihydrofolate + dTMP. It functions in the pathway pyrimidine metabolism; dTTP biosynthesis. Catalyzes the reductive methylation of 2'-deoxyuridine-5'-monophosphate (dUMP) to 2'-deoxythymidine-5'-monophosphate (dTMP) while utilizing 5,10-methylenetetrahydrofolate (mTHF) as the methyl donor and reductant in the reaction, yielding dihydrofolate (DHF) as a by-product. This enzymatic reaction provides an intracellular de novo source of dTMP, an essential precursor for DNA biosynthesis. The sequence is that of Thymidylate synthase from Allorhizobium ampelinum (strain ATCC BAA-846 / DSM 112012 / S4) (Agrobacterium vitis (strain S4)).